Reading from the N-terminus, the 488-residue chain is 2,3-bisphosphoglycerate-independent phosphoglycerate mutase (488 aa).

Serine 10 (phosphoserine intermediate) is an active-site residue. Serine 10 provides a ligand contact to Mn(2+). Substrate-binding positions include histidine 69, 99–100 (RD), arginine 135, arginine 142, 215–218 (RADR), and lysine 290. Aspartate 359, histidine 363, aspartate 400, histidine 401, and histidine 430 together coordinate Mn(2+).

The protein belongs to the BPG-independent phosphoglycerate mutase family. In terms of assembly, monomer. It depends on Mn(2+) as a cofactor.

Its subcellular location is the cytoplasm. It catalyses the reaction (2R)-2-phosphoglycerate = (2R)-3-phosphoglycerate. It functions in the pathway carbohydrate degradation; glycolysis; pyruvate from D-glyceraldehyde 3-phosphate: step 3/5. In terms of biological role, catalyzes the interconversion of 2-phosphoglycerate and 3-phosphoglycerate. The sequence is that of 2,3-bisphosphoglycerate-independent phosphoglycerate mutase from Prunus dulcis (Almond).